Reading from the N-terminus, the 357-residue chain is Histidinol-phosphate aminotransferase (357 aa).

The residue at position 222 (lysine 222) is an N6-(pyridoxal phosphate)lysine.

Belongs to the class-II pyridoxal-phosphate-dependent aminotransferase family. Histidinol-phosphate aminotransferase subfamily. Homodimer. It depends on pyridoxal 5'-phosphate as a cofactor.

The catalysed reaction is L-histidinol phosphate + 2-oxoglutarate = 3-(imidazol-4-yl)-2-oxopropyl phosphate + L-glutamate. It functions in the pathway amino-acid biosynthesis; L-histidine biosynthesis; L-histidine from 5-phospho-alpha-D-ribose 1-diphosphate: step 7/9. The sequence is that of Histidinol-phosphate aminotransferase from Leuconostoc mesenteroides subsp. mesenteroides (strain ATCC 8293 / DSM 20343 / BCRC 11652 / CCM 1803 / JCM 6124 / NCDO 523 / NBRC 100496 / NCIMB 8023 / NCTC 12954 / NRRL B-1118 / 37Y).